The sequence spans 153 residues: Ribonuclease H (153 aa).

The region spanning 1–141 is the RNase H type-1 domain; it reads MKHVHIFTDG…ADELARKGME (141 aa). Positions 9, 47, 69, and 133 each coordinate Mg(2+). The interval 123–153 is disordered; that stretch reads HAGHPENERADELARKGMEPFKKARRADAVK. A compositionally biased stretch (basic and acidic residues) spans 125–153; sequence GHPENERADELARKGMEPFKKARRADAVK.

It belongs to the RNase H family. In terms of assembly, monomer. It depends on Mg(2+) as a cofactor.

The protein resides in the cytoplasm. The catalysed reaction is Endonucleolytic cleavage to 5'-phosphomonoester.. Endonuclease that specifically degrades the RNA of RNA-DNA hybrids. The sequence is that of Ribonuclease H from Rhizobium meliloti (strain 1021) (Ensifer meliloti).